We begin with the raw amino-acid sequence, 525 residues long: Probable protein kinase UbiB (525 aa).

Residues 119 to 501 (RFDHHPVASA…QRRTNRLLSA (383 aa)) enclose the Protein kinase domain. Residues 125–133 (VASASIAQV) and Lys-151 each bind ATP. Catalysis depends on Asp-286, which acts as the Proton acceptor. Residues 502–522 (ALLFIGGFAVGIIATHVLAWL) traverse the membrane as a helical segment.

Belongs to the ABC1 family. UbiB subfamily.

The protein resides in the cell inner membrane. Its pathway is cofactor biosynthesis; ubiquinone biosynthesis [regulation]. Its function is as follows. Is probably a protein kinase regulator of UbiI activity which is involved in aerobic coenzyme Q (ubiquinone) biosynthesis. This is Probable protein kinase UbiB from Ralstonia nicotianae (strain ATCC BAA-1114 / GMI1000) (Ralstonia solanacearum).